Reading from the N-terminus, the 331-residue chain is Protein-methionine-sulfoxide reductase catalytic subunit MsrP (331 aa).

The segment at residues 1 to 57 is a signal peptide (tat-type signal); that stretch reads MLIKKTLRAALAGDDIPRSEITPRAVFEHRRRILQAAGAAAAGGLVGAHGLALAAYA. Mo-molybdopterin-binding positions include Asn-90, 93–94, Cys-148, Thr-183, Asn-231, Arg-236, and 247–249; these read YE and SAK.

The protein belongs to the MsrP family. Heterodimer of a catalytic subunit (MsrP) and a heme-binding subunit (MsrQ). It depends on Mo-molybdopterin as a cofactor. Post-translationally, predicted to be exported by the Tat system. The position of the signal peptide cleavage has not been experimentally proven.

It is found in the periplasm. The catalysed reaction is L-methionyl-[protein] + a quinone + H2O = L-methionyl-(S)-S-oxide-[protein] + a quinol. The enzyme catalyses L-methionyl-[protein] + a quinone + H2O = L-methionyl-(R)-S-oxide-[protein] + a quinol. Functionally, part of the MsrPQ system that repairs oxidized periplasmic proteins containing methionine sulfoxide residues (Met-O), using respiratory chain electrons. Thus protects these proteins from oxidative-stress damage caused by reactive species of oxygen and chlorine generated by the host defense mechanisms. MsrPQ is essential for the maintenance of envelope integrity under bleach stress, rescuing a wide series of structurally unrelated periplasmic proteins from methionine oxidation. The catalytic subunit MsrP is non-stereospecific, being able to reduce both (R-) and (S-) diastereoisomers of methionine sulfoxide. The sequence is that of Protein-methionine-sulfoxide reductase catalytic subunit MsrP from Burkholderia mallei (strain ATCC 23344).